Here is a 287-residue protein sequence, read N- to C-terminus: 2-dehydro-3-deoxyphosphooctonate aldolase (287 aa).

The protein belongs to the KdsA family.

It is found in the cytoplasm. It carries out the reaction D-arabinose 5-phosphate + phosphoenolpyruvate + H2O = 3-deoxy-alpha-D-manno-2-octulosonate-8-phosphate + phosphate. The protein operates within carbohydrate biosynthesis; 3-deoxy-D-manno-octulosonate biosynthesis; 3-deoxy-D-manno-octulosonate from D-ribulose 5-phosphate: step 2/3. It participates in bacterial outer membrane biogenesis; lipopolysaccharide biosynthesis. The polypeptide is 2-dehydro-3-deoxyphosphooctonate aldolase (Nitrobacter hamburgensis (strain DSM 10229 / NCIMB 13809 / X14)).